The sequence spans 341 residues: Alpha-ketoglutarate-dependent dioxygenase oryG (341 aa).

His-100 contributes to the substrate binding site. The Fe cation site is built by His-140 and Asp-142. Thr-167 is a 2-oxoglutarate binding site. His-299 is a Fe cation binding site. 2-oxoglutarate is bound by residues Arg-311 and Arg-315. Arg-315 provides a ligand contact to substrate.

Belongs to the TfdA dioxygenase family. The cofactor is Fe(2+).

The protein operates within secondary metabolite biosynthesis. Alpha-ketoglutarate-dependent dioxygenase; part of the gene cluster that mediates the biosynthesis of oryzines, natural products with an unusual maleidride backbone. The two subunits of the fungal fatty acid synthase oryfasA and oryfasB probably form octenoic acid. This fatty acid is most likely activated by the acyl-CoA ligase oryP to give octenyl-CoA before the citrate synthase-like protein oryE catalyzes condensation with oxaloacetate to form tricarboxylic acid. The next steps of the pathways are conjectural, but a favorite possible route has been proposed, beginning with decarboxylation and concomitant dehydration by the decarboxylase oryM, followed by tautomerization, which may lead to the production of a diene intermediate. Reduction of this diene intermediate could give the known metabolite piliformic acid. On the pathway to oryzine B and oryzine A, however, hydroxylation of the diene by the alpha-ketoglutarate-dependent dioxygenase oryG and lactonisation by the lactonohydrolases oryH or oryL could give oryzine B directly. Finally, enoyl reduction by the dehydrogenase oryD would then convert oryzine B into oryzine A. The polypeptide is Alpha-ketoglutarate-dependent dioxygenase oryG (Aspergillus oryzae (strain ATCC 42149 / RIB 40) (Yellow koji mold)).